A 479-amino-acid polypeptide reads, in one-letter code: Xylose isomerase (479 aa).

His-144 is an active-site residue. Mn(2+) is bound by residues Glu-275, Glu-311, His-314, Asp-339, Asp-350, Asp-352, and Tyr-382.

This sequence belongs to the xylose isomerase family. In terms of assembly, homodimer. Requires Mn(2+) as cofactor.

The catalysed reaction is alpha-D-xylose = alpha-D-xylulofuranose. The chain is Xylose isomerase (XYLA) from Hordeum vulgare (Barley).